The following is a 1733-amino-acid chain: Serine-aspartate repeat-containing protein F (1733 aa).

Residues 1–45 (MKKRRQGPINKRVDFLSNKVNKYSIRKFTVGTASILVGATLMFGA) form the signal peptide. A ligand binding A region region spans residues 46 to 678 (ADNEAKAAED…GSSTAQGDNP (633 aa)). Disordered regions lie at residues 51–269 (KAAE…SVND) and 332–351 (PLALNRSQSKNSPHKSASPR). The span at 61 to 74 (ASKEEQKGSRDNEN) shows a compositional bias: basic and acidic residues. 2 stretches are compositionally biased toward polar residues: residues 85–99 (GSHSSEKTTNVNNAT) and 146–168 (PKTSTTQQDSTEKNNPSLKDNLN). Residues 175-184 (KESKTDEHST) show a composition bias toward basic and acidic residues. The span at 186–226 (QAQMSTNKSNLDTNDSPTQSEKTSSQANNDSTDNQSAPSKQ) shows a compositional bias: polar residues. Basic and acidic residues predominate over residues 227–253 (LDSKPSEQKVYKTKFNDEPTQDVEHTT). 2 stretches are compositionally biased toward polar residues: residues 255 to 266 (KLKTPSVSTDSS) and 336 to 346 (NRSQSKNSPHK). 4 consecutive CNA-B domains span residues 679-797 (TYSL…YLTP), 798-907 (KYNV…FYKP), 908-1018 (TYNL…YKTP), and 1019-1129 (KYSV…FDDD). A type I collagen binding region region spans residues 679–1129 (TYSLGDYVWL…SIDNGYFDDD (451 aa)). The interval 862–890 (FETPEGYTPTKQNSGSDEGKDSNGTKTTV) is disordered. The segment at 1085–1708 (KPEGMTQTTA…ANEDHDSKGT (624 aa)) is disordered. Over residues 1107–1119 (EDVRVTITDHDDF) the composition is skewed to basic and acidic residues. The segment covering 1125–1684 (YFDDDSDSDS…DSDSDSDSDS (560 aa)) has biased composition (acidic residues). Positions 1685-1706 (DSDKNAKDKLPDTGANEDHDSK) are enriched in basic and acidic residues. Positions 1694-1698 (LPDTG) match the LPXTG sorting signal motif. At Thr-1697 the chain carries Pentaglycyl murein peptidoglycan amidated threonine. Residues 1698–1733 (GANEDHDSKGTLLGTLFAGLGALLLGRRRKKDNKEK) constitute a propeptide, removed by sortase.

The protein belongs to the serine-aspartate repeat-containing protein (SDr) family.

It localises to the secreted. The protein resides in the cell wall. In terms of biological role, binds to type I collagen via alpha-2(I) or alpha-1(I) chains, although its affinity for the alpha-1(I) chain is significantly higher. Involved in bacterial adherence to transcutaneous drivelines from explanted ventricular assist devices. In Staphylococcus epidermidis, this protein is Serine-aspartate repeat-containing protein F (sdrF).